An 89-amino-acid chain; its full sequence is DNA/RNA-binding protein Alba 1 (89 aa).

This sequence belongs to the histone-like Alba family.

Its subcellular location is the cytoplasm. It localises to the chromosome. Its function is as follows. Binds double-stranded DNA tightly but without sequence specificity. Involved in DNA compaction. The polypeptide is DNA/RNA-binding protein Alba 1 (Archaeoglobus fulgidus (strain ATCC 49558 / DSM 4304 / JCM 9628 / NBRC 100126 / VC-16)).